A 109-amino-acid chain; its full sequence is ADIVMTQTPASVSAAVGGTVTINCQASQNIDSWLAWYQQKPGQPPKVLIYRTSTLASGVPSRFKGSRSGTEFTLTISDLECADAATYYCQSYYSISSAFGGGTEVVVKG.

Positions 1–24 (ADIVMTQTPASVSAAVGGTVTINC) are framework-1. The tract at residues 25–35 (QASQNIDSWLA) is complementarity-determining-1. The interval 36-50 (WYQQKPGQPPKVLIY) is framework-2. Residues 51-57 (RTSTLAS) form a complementarity-determining-2 region. The segment at 58–89 (GVPSRFKGSRSGTEFTLTISDLECADAATYYC) is framework-3. Residues 90-98 (QSYYSISSA) form a complementarity-determining-3 region. A framework-4 region spans residues 99-108 (FGGGTEVVVK).

The sequence is that of Ig kappa chain V region 3374 from Oryctolagus cuniculus (Rabbit).